The following is a 605-amino-acid chain: Elongation factor 4 (605 aa).

One can recognise a tr-type G domain in the interval 10–192; that stretch reads KNIRNFAIVA…AIVMRLPPPH (183 aa). GTP contacts are provided by residues 22-27 and 139-142; these read DHGKST and NKVD.

Belongs to the TRAFAC class translation factor GTPase superfamily. Classic translation factor GTPase family. LepA subfamily.

It localises to the cell inner membrane. The catalysed reaction is GTP + H2O = GDP + phosphate + H(+). Functionally, required for accurate and efficient protein synthesis under certain stress conditions. May act as a fidelity factor of the translation reaction, by catalyzing a one-codon backward translocation of tRNAs on improperly translocated ribosomes. Back-translocation proceeds from a post-translocation (POST) complex to a pre-translocation (PRE) complex, thus giving elongation factor G a second chance to translocate the tRNAs correctly. Binds to ribosomes in a GTP-dependent manner. In Chelativorans sp. (strain BNC1), this protein is Elongation factor 4.